A 310-amino-acid chain; its full sequence is uncharacterized protein (310 aa).

Transmembrane regions (helical) follow at residues 1-21 (MIYF…MFSK), 38-58 (FFFY…VVYT), 74-94 (TSYF…FFIF), 110-130 (YGLW…SFLF), 135-155 (WILY…IFFS), 194-214 (IFIT…IVFS), 228-248 (LFII…MYLF), 256-276 (FPIM…KILI), and 284-304 (IFLT…INLI).

It belongs to the TerC family.

Its subcellular location is the cell membrane. This is an uncharacterized protein from Buchnera aphidicola subsp. Schizaphis graminum (strain Sg).